Reading from the N-terminus, the 253-residue chain is 3-dehydroquinate dehydratase (253 aa).

3-dehydroquinate-binding positions include 46–48 and Arg82; that span reads EWR. The active-site Proton donor/acceptor is His143. The Schiff-base intermediate with substrate role is filled by Lys170. 3 residues coordinate 3-dehydroquinate: Arg213, Ser232, and Gln236.

It belongs to the type-I 3-dehydroquinase family. In terms of assembly, homodimer.

The enzyme catalyses 3-dehydroquinate = 3-dehydroshikimate + H2O. The protein operates within metabolic intermediate biosynthesis; chorismate biosynthesis; chorismate from D-erythrose 4-phosphate and phosphoenolpyruvate: step 3/7. Its activity is regulated as follows. Inhibited by flavonoids such as datiscetin, naringenin, marein and phloretin. Its function is as follows. Involved in the third step of the chorismate pathway, which leads to the biosynthesis of aromatic amino acids (AroAA). Catalyzes the cis-dehydration of 3-dehydroquinate (DHQ) and introduces the first double bond of the aromatic ring to yield 3-dehydroshikimate. The reaction involves the formation of an imine intermediate between the keto group of 3-dehydroquinate and the epsilon-amino group of Lys-170 at the active site. The polypeptide is 3-dehydroquinate dehydratase (Enterococcus faecalis (strain ATCC 700802 / V583)).